The primary structure comprises 499 residues: Glycerol kinase (499 aa).

Threonine 17 serves as a coordination point for ADP. ATP is bound by residues threonine 17, threonine 18, and serine 19. Threonine 17 lines the sn-glycerol 3-phosphate pocket. Arginine 21 contacts ADP. 4 residues coordinate sn-glycerol 3-phosphate: arginine 87, glutamate 88, tyrosine 139, and aspartate 243. Positions 87, 88, 139, 243, and 244 each coordinate glycerol. Threonine 265 and glycine 308 together coordinate ADP. ATP contacts are provided by threonine 265, glycine 308, glutamine 312, and glycine 409. Glycine 409 and asparagine 413 together coordinate ADP.

The protein belongs to the FGGY kinase family.

The enzyme catalyses glycerol + ATP = sn-glycerol 3-phosphate + ADP + H(+). Its pathway is polyol metabolism; glycerol degradation via glycerol kinase pathway; sn-glycerol 3-phosphate from glycerol: step 1/1. Its activity is regulated as follows. Inhibited by fructose 1,6-bisphosphate (FBP). In terms of biological role, key enzyme in the regulation of glycerol uptake and metabolism. Catalyzes the phosphorylation of glycerol to yield sn-glycerol 3-phosphate. This chain is Glycerol kinase, found in Pseudomonas entomophila (strain L48).